A 247-amino-acid polypeptide reads, in one-letter code: 3-deoxy-manno-octulosonate cytidylyltransferase (247 aa).

Belongs to the KdsB family.

The protein localises to the cytoplasm. The catalysed reaction is 3-deoxy-alpha-D-manno-oct-2-ulosonate + CTP = CMP-3-deoxy-beta-D-manno-octulosonate + diphosphate. The protein operates within nucleotide-sugar biosynthesis; CMP-3-deoxy-D-manno-octulosonate biosynthesis; CMP-3-deoxy-D-manno-octulosonate from 3-deoxy-D-manno-octulosonate and CTP: step 1/1. It participates in bacterial outer membrane biogenesis; lipopolysaccharide biosynthesis. Its function is as follows. Activates KDO (a required 8-carbon sugar) for incorporation into bacterial lipopolysaccharide in Gram-negative bacteria. This Chlorobium phaeovibrioides (strain DSM 265 / 1930) (Prosthecochloris vibrioformis (strain DSM 265)) protein is 3-deoxy-manno-octulosonate cytidylyltransferase.